Consider the following 304-residue polypeptide: tRNA pseudouridine synthase A (304 aa).

The active-site Nucleophile is the Asp65. Substrate is bound at residue Tyr123. Residues 274-304 (HTGQEKPEARLGNGDLESREERPPHEMSPLH) form a disordered region. Residues 289-298 (LESREERPPH) show a composition bias toward basic and acidic residues.

This sequence belongs to the tRNA pseudouridine synthase TruA family. As to quaternary structure, homodimer.

It catalyses the reaction uridine(38/39/40) in tRNA = pseudouridine(38/39/40) in tRNA. In terms of biological role, formation of pseudouridine at positions 38, 39 and 40 in the anticodon stem and loop of transfer RNAs. The polypeptide is tRNA pseudouridine synthase A (Gloeobacter violaceus (strain ATCC 29082 / PCC 7421)).